Reading from the N-terminus, the 417-residue chain is 3-oxo-isoapionate-4-phosphate decarboxylase (417 aa).

Mg(2+) contacts are provided by K177, D179, and E180. K177 carries the N6-carboxylysine modification.

The protein belongs to the RuBisCO large chain family. The cofactor is Mg(2+).

The enzyme catalyses 3-oxoisoapionate 4-phosphate + H(+) = L-erythrulose 1-phosphate + CO2. It functions in the pathway carbohydrate metabolism. Functionally, involved in catabolism of D-apiose. Catalyzes the decarboxylation of 3-oxo-isoapionate 4-phosphate to L-erythrulose 1-phosphate. The sequence is that of 3-oxo-isoapionate-4-phosphate decarboxylase from Rhizobium etli (strain ATCC 51251 / DSM 11541 / JCM 21823 / NBRC 15573 / CFN 42).